A 237-amino-acid polypeptide reads, in one-letter code: Pre-protein VI (237 aa).

Residues 1-32 (MDDPFSTLAPRRGTQPLLSNWATIGISELHGG) constitute a propeptide that is removed on maturation. An amphipathic alpha-helix essential for membrane lytic activity region spans residues 33–57 (ALGWGSWWSNLSRLGSSFGSNLKNL). The interval 35-56 (GWGSWWSNLSRLGSSFGSNLKN) is involved in endosomal membrane lysis. The interaction with hexon protein stretch occupies residues 51–77 (GSNLKNLGLKAWNSSTGQALRQHLKDT). A Nuclear export signal motif is present at residues 70-79 (LRQHLKDTNL). T146 carries the post-translational modification Phosphothreonine; by host. A Nuclear export signal motif is present at residues 218–229 (GTLDSIMGLGLQ). Residues 220–226 (LDSIMGL) are interaction with hexon protein. The segment at 227 to 237 (GLQPIKRRRCF) is binds to importin alpha/beta, involved in hexon nuclear import. Residues 232–235 (KRRR) carry the Nuclear localization signal motif.

It belongs to the adenoviridae protein VI family. In terms of assembly, interacts with hexon protein; this interaction allows nuclear import of hexon trimers and possibly pre-capsid assembly. Interacts (via C-terminal NLS) with importin alpha/beta. As to quaternary structure, interacts (via PPxY motif) with host NEDD4 ubiquitine ligase; this interaction might play a role in virus intracellular transport during entry. Part of a complex composed of the core-capsid bridging protein, the endosome lysis protein VI and the hexon-linking protein VIII; these interactions bridge the virus core to the capsid. Interacts with peripentonal hexons; this interaction stabilizes the capsid by gluing two peripentonal hexons together and joining them with an adjacent group-of-nine hexon. Heterodimer with the viral protease; disulfide-linked. Interacts with the viral protease. In terms of processing, ubiquitinated by Nedd4 following partial capsid disassembly; which might play a role in intracellular virus movement during entry. Post-translationally, contains the major nuclear import and export signals. Proteolytically removed during virion maturation. The processing of the C-terminus turns the precursor into a mature viral structural protein and abrogates its ability to promote hexon import and act as a potential chaperone protein.

The protein localises to the host nucleus. It localises to the host cytoplasm. It is found in the virion. Its function is as follows. During virus assembly, promotes hexon trimers nuclear import through nuclear pore complexes via an importin alpha/beta-dependent mechanism. By analogy to herpesviruses capsid assembly, might act as a chaperone to promote the formation of the icosahedral capsid. Structural component of the virion that provides increased stability to the particle shell through its interaction with the core-capsid bridging protein and the hexon-linking protein VIII. Fibers shedding during virus entry into host cell allows the endosome lysis protein to be exposed as a membrane-lytic peptide. Exhibits pH-independent membrane fragmentation activity and probably mediates viral rapid escape from host endosome via organellar membrane lysis. It is not clear if it then remains partially associated with the capsid and involved in the intracellular microtubule-dependent transport of capsid to the nucleus, or if it is lost during endosomal penetration. Functionally, cofactor that activates the viral protease. Binds to viral protease in a 1:1 ratio. This is Pre-protein VI from Mus musculus (Mouse).